The sequence spans 382 residues: Sphingosine kinase 1 (382 aa).

Residues 12–159 (PRPCRVLVLL…MNLLSLHTAS (148 aa)) form the DAGKc domain. Residues 22 to 24 (NPQ) and 54 to 58 (TERKN) contribute to the ATP site. 79 to 82 (SGDG) contributes to the substrate binding site. Residue Asp-81 is the Proton donor/acceptor of the active site. Residues Glu-86 and 111-113 (GSG) each bind ATP. 2 short sequence motifs (nuclear export signal) span residues 147–155 (LSPMNLLSL) and 161–169 (LRLYSVLSL). Residue Asp-178 participates in substrate binding. The ATP site is built by Arg-185 and Arg-191. Phosphothreonine is present on Thr-193. At Ser-225 the chain carries Phosphoserine. ATP is bound at residue 340–342 (DGE).

Interacts with ACY1. Binds to calmodulin. Interacts with SPHKAP. Interacts with CIB1, the interaction occurs in a calcium-dependent manner. Interacts with TRAF2. Interacts with EEF1A1; the interaction enhances SPHK1 kinase activity. Mg(2+) serves as cofactor. As to expression, widely expressed. Expressed in brain (at protein level). Detected in neurons.

It localises to the cytoplasm. It is found in the endosome membrane. Its subcellular location is the nucleus. The protein resides in the cell membrane. The protein localises to the synapse. The enzyme catalyses a sphingoid base + ATP = a sphingoid 1-phosphate + ADP + H(+). It catalyses the reaction L-seryl-[protein] + acetyl-CoA = O-acetyl-L-seryl-[protein] + CoA. It carries out the reaction sphinganine + ATP = sphinganine 1-phosphate + ADP + H(+). The catalysed reaction is sphing-4-enine + ATP = sphing-4-enine 1-phosphate + ADP + H(+). The enzyme catalyses 1-O-hexadecyl-2-amino-sn-glycerol + ATP = 1-O-hexadecyl-2-desoxy-2-amino-sn-glycero-3-phosphate + ADP + H(+). Its activity is regulated as follows. Acetyltransferase activity increases in presence of the kinase substrate, sphingosine. In Purkinje cells, kinase activity on sphingosine increases in presence of VEGFA. In neurons, kinase activity increases during the first 24h in presence of Amyloid-beta protein 42 to decrease after 96h. Its function is as follows. Catalyzes the phosphorylation of sphingosine to form sphingosine 1-phosphate (SPP), a lipid mediator with both intra- and extracellular functions. Also acts on D-erythro-sphingosine and to a lesser extent sphinganine, but not other lipids, such as D,L-threo-dihydrosphingosine, N,N-dimethylsphingosine, diacylglycerol, ceramide, or phosphatidylinositol. In contrast to proapoptotic SPHK2, has a negative effect on intracellular ceramide levels, enhances cell growth and inhibits apoptosis. Involved in the regulation of inflammatory response and neuroinflammation. Via the product sphingosine 1-phosphate, stimulates TRAF2 E3 ubiquitin ligase activity, and promotes activation of NF-kappa-B in response to TNF signaling. In response to TNF and in parallel to NF-kappa-B activation, negatively regulates RANTES induction through p38 MAPK signaling pathway. Involved in endocytic membrane trafficking induced by sphingosine, recruited to dilate endosomes, also plays a role on later stages of endosomal maturation and membrane fusion independently of its kinase activity. In Purkinje cells, seems to be also involved in the regulation of autophagosome-lysosome fusion upon VEGFA. In terms of biological role, has serine acetyltransferase activity on PTGS2/COX2 in an acetyl-CoA dependent manner. The acetyltransferase activity increases in presence of the kinase substrate, sphingosine. During neuroinflammation, through PTGS2 acetylation, promotes neuronal secretion of specialized preresolving mediators (SPMs), especially 15-R-lipoxin A4, which results in an increase of phagocytic microglia. This Mus musculus (Mouse) protein is Sphingosine kinase 1.